Here is a 350-residue protein sequence, read N- to C-terminus: Biotin synthase (350 aa).

The Radical SAM core domain maps to 38-256; it reads NYVQVSTLLS…IAIARIMMPQ (219 aa). 3 residues coordinate [4Fe-4S] cluster: C53, C57, and C60. 4 residues coordinate [2Fe-2S] cluster: C97, C128, C188, and R260.

Belongs to the radical SAM superfamily. Biotin synthase family. Homodimer. [4Fe-4S] cluster is required as a cofactor. The cofactor is [2Fe-2S] cluster.

It catalyses the reaction (4R,5S)-dethiobiotin + (sulfur carrier)-SH + 2 reduced [2Fe-2S]-[ferredoxin] + 2 S-adenosyl-L-methionine = (sulfur carrier)-H + biotin + 2 5'-deoxyadenosine + 2 L-methionine + 2 oxidized [2Fe-2S]-[ferredoxin]. It functions in the pathway cofactor biosynthesis; biotin biosynthesis; biotin from 7,8-diaminononanoate: step 2/2. In terms of biological role, catalyzes the conversion of dethiobiotin (DTB) to biotin by the insertion of a sulfur atom into dethiobiotin via a radical-based mechanism. This Vibrio campbellii (strain ATCC BAA-1116) protein is Biotin synthase.